Here is a 347-residue protein sequence, read N- to C-terminus: MDLAANEISIYDKLSETVDLVRQTGHQCGMSEKAIEKFIRQLLEKNEPQRPPPQYPLLIVVYKVLATLGLILLTAYFVIQPFSPLAPEPVLSGAHTWRSLIHHIRLMSLPIAKKYMSENKGVPLHGGDEDRPFPDFDPWWTNDCEQNESEPIPANCTGCAQKHLKVMLLEDAPRKFERLHPLVIKTGKPLLEEEIQHFLCQYPEATEGFSEGFFAKWWRCFPERWFPFPYPWRRPLNRSQMLRELFPVFTHLPFPKDASLNKCSFLHPEPVVGSKMHKMPDLFIIGSGEAMLQLIPPFQCRRHCQSVAMPIEPGDIGYVDTTHWKVYVIARGVQPLVICDGTAFSEL.

The Cytoplasmic portion of the chain corresponds to 1–58; sequence MDLAANEISIYDKLSETVDLVRQTGHQCGMSEKAIEKFIRQLLEKNEPQRPPPQYPLL. A helical membrane pass occupies residues 59-79; the sequence is IVVYKVLATLGLILLTAYFVI. Over 80 to 347 the chain is Extracellular; it reads QPFSPLAPEP…ICDGTAFSEL (268 aa).

In terms of assembly, homodimer. Interacts with BRS3. Interacts (via N-terminus) with SIN3B. Glycosylated.

It localises to the golgi apparatus membrane. The protein localises to the midbody. It is found in the cytoplasm. Its subcellular location is the nucleus. The protein resides in the nucleolus. Functionally, exhibits histone deacetylase (HDAC) enhancer properties. May play a role in cell cycle progression and wound repair of bronchial epithelial cells. The chain is Bombesin receptor-activated protein C6orf89 (C6orf89) from Homo sapiens (Human).